The primary structure comprises 344 residues: Glycerol-3-phosphate dehydrogenase [NAD(P)+] (344 aa).

Residues Trp-18, His-38, and Lys-115 each coordinate NADPH. The sn-glycerol 3-phosphate site is built by Lys-115, Gly-144, and Thr-146. Ala-148 serves as a coordination point for NADPH. Residues Lys-199, Asp-252, Ser-262, Arg-263, and Asn-264 each coordinate sn-glycerol 3-phosphate. Lys-199 functions as the Proton acceptor in the catalytic mechanism. An NADPH-binding site is contributed by Arg-263. NADPH contacts are provided by Val-288 and Glu-290.

Belongs to the NAD-dependent glycerol-3-phosphate dehydrogenase family.

The protein localises to the cytoplasm. It catalyses the reaction sn-glycerol 3-phosphate + NAD(+) = dihydroxyacetone phosphate + NADH + H(+). The enzyme catalyses sn-glycerol 3-phosphate + NADP(+) = dihydroxyacetone phosphate + NADPH + H(+). The protein operates within membrane lipid metabolism; glycerophospholipid metabolism. Its function is as follows. Catalyzes the reduction of the glycolytic intermediate dihydroxyacetone phosphate (DHAP) to sn-glycerol 3-phosphate (G3P), the key precursor for phospholipid synthesis. This is Glycerol-3-phosphate dehydrogenase [NAD(P)+] from Hydrogenovibrio crunogenus (strain DSM 25203 / XCL-2) (Thiomicrospira crunogena).